Reading from the N-terminus, the 809-residue chain is MPSSISVKLVAAESLYKRDVFRSPDPFAVLTIDGYQTKSTSAAKKTLNPYWNETFKFDDINENSILTIQVFDQKKFKKKDQGFLGVVNVRVGDVLGHLDEDTATSSGRPREETITRDLKKSNDGMAVSGRLIVVLSKLPSSSPHSQAPSGHTASSSTNTSSTTRTNGHSTSSTRNHSTSHPSRGTAQAVESTLQSGTTAATNTATTSHRSTNSTSSATRQYSSFEDQYGRLPPGWERRTDNFGRTYYVDHNTRTTTWKRPTLDQTEAERGNQLNANTELERRQHRGRTLPGGSSDNSSVTVQVGGGSNIPPVNGAAAAAFAATGGTTSGLGELPSGWEQRFTPEGRAYFVDHNTRTTTWVDPRRQQYIRTYGPTNTTIQQQPVSQLGPLPSGWEMRLTNTARVYFVDHNTKTTTWDDPRLPSSLDQNVPQYKRDFRRKVIYFRSQPALRILPGQCHIKVRRKNIFEDAYQEIMRQTPEDLKKRLMIKFDGEEGLDYGGVSREFFFLLSHEMFNPFYCLFEYSAYDNYTIQINPNSGINPEHLNYFKFIGRVVGLGVFHRRFLDAFFVGALYKMMLRKKVVLQDMEGVDAEVYNSLNWMLENSIDGVLDLTFSADDERFGEVVTVDLKPDGRNIEVTDGNKKEYVELYTQWRIVDRVQEQFKAFMDGFNELIPEDLVTVFDERELELLIGGIAEIDIEDWKKHTDYRGYQESDEVIQWFWKCVSEWDNEQRARLLQFTTGTSRIPVNGFKDLQGSDGPRRFTIEKAGEVQQLPKSHTCFNRVDLPQYVDYDSMKQKLTLAVEETIGFGQE.

The C2 domain maps to Met-1 to Ser-105. Disordered regions lie at residues Asp-99 to Asn-122, Pro-139 to Asp-240, and Trp-257 to Ser-298. Basic and acidic residues predominate over residues Arg-108–Asn-122. Positions Pro-139–Pro-148 are enriched in polar residues. The segment covering Ser-149–Arg-183 has biased composition (low complexity). Residues Gly-184–Gly-196 are compositionally biased toward polar residues. Over residues Thr-197–Arg-219 the composition is skewed to low complexity. WW domains follow at residues Gly-229–Leu-262, Gly-331–Arg-364, and Gly-387–Leu-420. Residue Lys-258 forms a Glycyl lysine isopeptide (Lys-Gly) (interchain with G-Cter in ubiquitin) linkage. Residues Tyr-705–Glu-809 form the HECT domain. Catalysis depends on Cys-777, which acts as the Glycyl thioester intermediate.

It belongs to the RSP5/NEDD4 family. As to quaternary structure, component of the RSP5-BUL1/2 ubiquitin ligase complex composed of at least RSP5 and BUL1 or BUL2. Component of the RSP5-UBA1-UBC5 ubiquitin ligase complex composed of E3 RSP5, E1 UBA1 and E2 UBC5. Also forms a ternary complex with RUP1 and UBP2. Interacts (via WW domains) with LSB1. Interacts (via WW domains) with PIN3/LSB2. Interacts (via WW domains) with RCR1 (via PY motifs). Interacts with UBP2; the interaction is direct. Interacts with HSE1. Interacts with LAS17. Interacts with ROG3. Interacts with ROD1. Interacts with RVS167. Interacts with ubiquitin. The ubiquitination appears to be the result of an intramolecular transfer of ubiquitin.

The protein localises to the cytoplasm. It is found in the nucleus. Its subcellular location is the cytoskeleton. It localises to the actin patch. It catalyses the reaction S-ubiquitinyl-[E2 ubiquitin-conjugating enzyme]-L-cysteine + [acceptor protein]-L-lysine = [E2 ubiquitin-conjugating enzyme]-L-cysteine + N(6)-ubiquitinyl-[acceptor protein]-L-lysine.. The protein operates within protein modification; protein ubiquitination. In terms of biological role, E3 ubiquitin-protein ligase which accepts ubiquitin from an E2 ubiquitin-conjugating enzyme in the form of a thioester and then directly transfers the ubiquitin to targeted substrates. Component of a RSP5 ubiquitin ligase complex which specifies polyubiquitination and intracellular trafficking of the general amino acid permease GAP1 as well as other cell surface proteins like GAP1, FUR4, MAL61, PMA1 and STE2. The RSP5-BUL1/2 complex is also necessary for the heat-shock element (HSE)-mediated gene expression, nitrogen starvation GLN3-dependent transcription, pressure-induced differential regulation of the two tryptophan permeases TAT1 and TAT2 and sorting efficiency into multivesicular bodies. The RSP5-UBA1-UBC5 ubiquitin ligase complex ubiquitinates RPO21 forming 'Lys-63'-linked polyubiquitin chains. Plays a role in tolerance to o-dinitrobenzene. Involved in actin cytoskeleton organization and dynamics. Ubiquitinates the LAS17-binding proteins LSB1 and PIN3/LSB2 without directing them for degradation and affects LAS17 levels in a SLA1-dependent and LSB1/2-independent manner. Also involved in the degradation of non-functional 18S rRNAs in response to stalled ribosomes by mediating polyubiquitination of monoubiquitinated RPS3/uS3: mediates formation of 'Lys-63'-linked polyubiquitin chains on monoubiquitined RPS3/uS3, promoting the degradation of non-functional 18S rRNAs. The polypeptide is E3 ubiquitin-protein ligase RSP5 (RSP5) (Saccharomyces cerevisiae (strain ATCC 204508 / S288c) (Baker's yeast)).